Reading from the N-terminus, the 637-residue chain is Nuclear receptor subfamily 2 group C member 1-A (637 aa).

The segment at residues 149–224 (VELCVVCGDK…LGMKQDSVQC (76 aa)) is a DNA-binding region (nuclear receptor). 2 consecutive NR C4-type zinc fingers follow at residues 152-172 (CVVC…CEGC) and 188-207 (CRGS…CQYC). The NR LBD domain maps to 383 to 624 (CLGSNANLLH…SIIPYILRME (242 aa)).

The protein belongs to the nuclear hormone receptor family. NR2 subfamily.

It is found in the nucleus. Its function is as follows. Orphan nuclear receptor. Binds the IR7 element in the promoter of its own gene in an autoregulatory negative feedback mechanism. Primarily repressor of a broad range of genes. Binds to hormone response elements (HREs) consisting of two 5'-AGGTCA-3' half site direct repeat consensus sequences. This Xenopus laevis (African clawed frog) protein is Nuclear receptor subfamily 2 group C member 1-A (nr2c1-a).